A 323-amino-acid polypeptide reads, in one-letter code: GTP 3',8-cyclase (323 aa).

The Radical SAM core domain occupies 5–228 (GFGRKVDYLR…TVLRDTSSPA (224 aa)). Arg14 is a binding site for GTP. Cys21 and Cys25 together coordinate [4Fe-4S] cluster. Tyr27 lines the S-adenosyl-L-methionine pocket. Cys28 contributes to the [4Fe-4S] cluster binding site. Arg64 contributes to the GTP binding site. Gly68 serves as a coordination point for S-adenosyl-L-methionine. Residue Thr95 participates in GTP binding. Ser119 provides a ligand contact to S-adenosyl-L-methionine. Residue Lys155 coordinates GTP. Residue Met189 participates in S-adenosyl-L-methionine binding. Cys250 and Cys253 together coordinate [4Fe-4S] cluster. 255-257 (RIR) contacts GTP. A [4Fe-4S] cluster-binding site is contributed by Cys267. Residues 302–313 (KNKWSQKDDNEV) show a composition bias toward basic and acidic residues. The disordered stretch occupies residues 302 to 323 (KNKWSQKDDNEVSTRAFYQTGG).

This sequence belongs to the radical SAM superfamily. MoaA family. In terms of assembly, monomer and homodimer. [4Fe-4S] cluster serves as cofactor.

The enzyme catalyses GTP + AH2 + S-adenosyl-L-methionine = (8S)-3',8-cyclo-7,8-dihydroguanosine 5'-triphosphate + 5'-deoxyadenosine + L-methionine + A + H(+). It functions in the pathway cofactor biosynthesis; molybdopterin biosynthesis. In terms of biological role, catalyzes the cyclization of GTP to (8S)-3',8-cyclo-7,8-dihydroguanosine 5'-triphosphate. This Aliarcobacter butzleri (strain RM4018) (Arcobacter butzleri) protein is GTP 3',8-cyclase.